The sequence spans 383 residues: MSETALDLARALISCPSVTPQDGGTLGVLESRLKASGFRTHRLTFHEEGTPDIDNLYARFGSGAPCLVFAGHTDVVPVGTATDWRFDPFAAKVEDGQLWGRGAADMKGAIAAFTAAALTFIEQHKDFKGSIAFLITGDEEGPSINGTIKLLKWAAEQGEHFDHCIVGEPTNPQVLGDMIKIGRRGSLNGILSITGKQGHVAYPHRADNPVPKLMRLIEALIGTPLDEGTDHFDASNLEVVALSSGTDAYNVIPAKAEARFNIRFNDLWTPQTLELELLARLDSVAEGTAYTLTFEPCNALAFITKPDQFTDLVANAIEKQTGRRPELSTTGGTSDARFISAYCPVVEFGLVGQTMHMVDERVSVADIATLETIYTSILEGYFP.

Residue His-72 coordinates Zn(2+). Asp-74 is a catalytic residue. Asp-105 is a binding site for Zn(2+). Glu-139 functions as the Proton acceptor in the catalytic mechanism. Residues Glu-140, Glu-168, and His-356 each contribute to the Zn(2+) site.

This sequence belongs to the peptidase M20A family. DapE subfamily. In terms of assembly, homodimer. Zn(2+) is required as a cofactor. Co(2+) serves as cofactor.

It catalyses the reaction N-succinyl-(2S,6S)-2,6-diaminopimelate + H2O = (2S,6S)-2,6-diaminopimelate + succinate. It participates in amino-acid biosynthesis; L-lysine biosynthesis via DAP pathway; LL-2,6-diaminopimelate from (S)-tetrahydrodipicolinate (succinylase route): step 3/3. Functionally, catalyzes the hydrolysis of N-succinyl-L,L-diaminopimelic acid (SDAP), forming succinate and LL-2,6-diaminopimelate (DAP), an intermediate involved in the bacterial biosynthesis of lysine and meso-diaminopimelic acid, an essential component of bacterial cell walls. The polypeptide is Succinyl-diaminopimelate desuccinylase (Beijerinckia indica subsp. indica (strain ATCC 9039 / DSM 1715 / NCIMB 8712)).